The primary structure comprises 312 residues: MRVLLAPMEGVLDALVRELLTEVNDYDLCITEFVRVVDQLLPVKVFHRICPELHHASRTPSGTPVRIQLLGQHPQWLAENAARATALGSYGVDLNCGCPSKVVNGSGGGATLLKDPELIYQGAKAMRAAVPSHLPVTVKVRLGWDSGDRKFEIADAVQQAGASELVVHGRTKAQGYRAEHIDWQAIGEIRQRLTIPVIANGEILDWQSAQACMATSGCDAVMIGRGALNIPNLSRVVKYNEPRMPWPEVVTLLQKYTRLEKQGDTGLYHVARIKQWLGYLRKEYIEATELFQSIRALNRSSEIARAIQAIKI.

Residues 7–9 (PME) and Gln68 each bind FMN. The active-site Proton donor is the Cys98. FMN-binding positions include Lys139, 200–202 (NGE), and 224–225 (GR).

This sequence belongs to the Dus family. DusC subfamily. FMN serves as cofactor.

It carries out the reaction 5,6-dihydrouridine(16) in tRNA + NADP(+) = uridine(16) in tRNA + NADPH + H(+). The enzyme catalyses 5,6-dihydrouridine(16) in tRNA + NAD(+) = uridine(16) in tRNA + NADH + H(+). Its function is as follows. Catalyzes the synthesis of 5,6-dihydrouridine (D), a modified base found in the D-loop of most tRNAs, via the reduction of the C5-C6 double bond in target uridines. Specifically modifies U16 in tRNAs. The protein is tRNA-dihydrouridine(16) synthase of Salmonella typhimurium (strain LT2 / SGSC1412 / ATCC 700720).